Consider the following 390-residue polypeptide: MEEPGAQCAPPXPAGSETWVPQANLSSAPSQNCSAKDYIYQDSIALPWKVLLVMLLALITLATTLSNAFVIATVYRTRKLHTPANYLIASLAVTDLLVSILVMPISTMYTVTGRWTLGQVVCDFWLSSDITCCTASILHLCVIALDRYWAITDAVEYSAKRTPKRAAVMIALVWVFSISISLPPFFWRQAKAEEEVSECVVNTDHILYTVYSTVGAFYFPTLLLIALYGRIYVEARSRILKQTPNRTGKRLTRAQLITDSPGSTSSVTSINSRVPDVPSESGSPVYVNQVKVRVSDALLEKKKLMAARERKATKTLGIILGAFIVCWLPFFIISLVMPICKDACWFHLAIFDFFTWLGYLNSLINPIIYTMSNEDFKQAFHKLIRFKCTS.

Topologically, residues 1–46 are extracellular; that stretch reads MEEPGAQCAPPXPAGSETWVPQANLSSAPSQNCSAKDYIYQDSIAL. N24 and N32 each carry an N-linked (GlcNAc...) asparagine glycan. The chain crosses the membrane as a helical span at residues 47–72; it reads PWKVLLVMLLALITLATTLSNAFVIA. Topologically, residues 73 to 86 are cytoplasmic; it reads TVYRTRKLHTPANY. Residues 87–111 traverse the membrane as a helical segment; that stretch reads LIASLAVTDLLVSILVMPISTMYTV. Over 112-119 the chain is Extracellular; that stretch reads TGRWTLGQ. Residues 120–145 form a helical membrane-spanning segment; sequence VVCDFWLSSDITCCTASILHLCVIAL. A disulfide bridge connects residues C122 and C199. Positions 129 and 134 each coordinate ergotamine. A DRY motif; important for ligand-induced conformation changes and signaling motif is present at residues 146-148; it reads DRY. The Cytoplasmic portion of the chain corresponds to 146–165; that stretch reads DRYWAITDAVEYSAKRTPKR. The chain crosses the membrane as a helical span at residues 166 to 184; it reads AAVMIALVWVFSISISLPP. Over 185-205 the chain is Extracellular; it reads FFWRQAKAEEEVSECVVNTDH. An ergotamine-binding site is contributed by V201. Residues 206 to 229 traverse the membrane as a helical segment; the sequence is ILYTVYSTVGAFYFPTLLLIALYG. Residues 230 to 315 are Cytoplasmic-facing; sequence RIYVEARSRI…AARERKATKT (86 aa). Over residues 259–272 the composition is skewed to polar residues; that stretch reads DSPGSTSSVTSINS. The segment at 259–281 is disordered; it reads DSPGSTSSVTSINSRVPDVPSES. The helical transmembrane segment at 316–337 threads the bilayer; that stretch reads LGIILGAFIVCWLPFFIISLVM. Residues 338–347 lie on the Extracellular side of the membrane; sequence PICKDACWFH. Residues 348 to 370 traverse the membrane as a helical segment; the sequence is LAIFDFFTWLGYLNSLINPIIYT. The NPxxY motif; important for ligand-induced conformation changes and signaling motif lies at 365–369; that stretch reads NPIIY. Residues 371–390 lie on the Cytoplasmic side of the membrane; that stretch reads MSNEDFKQAFHKLIRFKCTS. The S-palmitoyl cysteine moiety is linked to residue C388.

This sequence belongs to the G-protein coupled receptor 1 family. As to quaternary structure, homodimer. Heterodimer with HTR1D. In terms of processing, phosphorylated. Desensitization of the receptor may be mediated by its phosphorylation. Post-translationally, palmitoylated.

It localises to the cell membrane. Functionally, G-protein coupled receptor for 5-hydroxytryptamine (serotonin). Also functions as a receptor for ergot alkaloid derivatives, various anxiolytic and antidepressant drugs and other psychoactive substances, such as lysergic acid diethylamide (LSD). Ligand binding causes a conformation change that triggers signaling via guanine nucleotide-binding proteins (G proteins) and modulates the activity of downstream effectors, such as adenylate cyclase. HTR1B is coupled to G(i)/G(o) G alpha proteins and mediates inhibitory neurotransmission by inhibiting adenylate cyclase activity. Arrestin family members inhibit signaling via G proteins and mediate activation of alternative signaling pathways. Regulates the release of 5-hydroxytryptamine, dopamine and acetylcholine in the brain, and thereby affects neural activity, nociceptive processing, pain perception, mood and behavior. Besides, plays a role in vasoconstriction of cerebral arteries. The sequence is that of 5-hydroxytryptamine receptor 1B (HTR1B) from Gorilla gorilla gorilla (Western lowland gorilla).